The primary structure comprises 245 residues: 3-deoxy-manno-octulosonate cytidylyltransferase (245 aa).

Belongs to the KdsB family.

The protein resides in the cytoplasm. It carries out the reaction 3-deoxy-alpha-D-manno-oct-2-ulosonate + CTP = CMP-3-deoxy-beta-D-manno-octulosonate + diphosphate. It participates in nucleotide-sugar biosynthesis; CMP-3-deoxy-D-manno-octulosonate biosynthesis; CMP-3-deoxy-D-manno-octulosonate from 3-deoxy-D-manno-octulosonate and CTP: step 1/1. The protein operates within bacterial outer membrane biogenesis; lipopolysaccharide biosynthesis. Activates KDO (a required 8-carbon sugar) for incorporation into bacterial lipopolysaccharide in Gram-negative bacteria. This is 3-deoxy-manno-octulosonate cytidylyltransferase from Rhodopseudomonas palustris (strain ATCC BAA-98 / CGA009).